Reading from the N-terminus, the 350-residue chain is Peptide-N(4)-(N-acetyl-beta-glucosaminyl)asparagine amidase (350 aa).

The Zn(2+) site is built by Cys-123, Cys-126, Cys-157, and Cys-160. Cys-183 serves as the catalytic Nucleophile. Catalysis depends on residues His-210 and Asp-227. Glu-230 serves as a coordination point for substrate. The interval 324–350 is disordered; it reads EIPPAAGAAGRQSGSADWKRQRGEDGR. Basic and acidic residues predominate over residues 340–350; that stretch reads DWKRQRGEDGR.

The protein belongs to the transglutaminase-like superfamily. PNGase family. Zn(2+) serves as cofactor.

It localises to the cytoplasm. It catalyses the reaction Hydrolysis of an N(4)-(acetyl-beta-D-glucosaminyl)asparagine residue in which the glucosamine residue may be further glycosylated, to yield a (substituted) N-acetyl-beta-D-glucosaminylamine and a peptide containing an aspartate residue.. Its function is as follows. Specifically deglycosylates the denatured form of N-linked glycoproteins in the cytoplasm and assists their proteasome-mediated degradation. Cleaves the beta-aspartyl-glucosamine (GlcNAc) of the glycan and the amide side chain of Asn, converting Asn to Asp. Prefers proteins containing high-mannose over those bearing complex type oligosaccharides. Can recognize misfolded proteins in the endoplasmic reticulum that are exported to the cytosol to be destroyed and deglycosylate them, while it has no activity toward native proteins. Deglycosylation is a prerequisite for subsequent proteasome-mediated degradation of some, but not all, misfolded glycoproteins. This chain is Peptide-N(4)-(N-acetyl-beta-glucosaminyl)asparagine amidase (PNG1), found in Eremothecium gossypii (strain ATCC 10895 / CBS 109.51 / FGSC 9923 / NRRL Y-1056) (Yeast).